The primary structure comprises 1205 residues: ATP-dependent DNA helicase MER3 homolog (1205 aa).

Positions 41 to 236 (PACFLSDVNM…WLAVPSEGIK (196 aa)) constitute a Helicase ATP-binding domain. Residue 54–61 (APTGSGKT) participates in ATP binding. A DEAH box motif is present at residues 172–175 (DEVH). Positions 266-467 (RLQSFIFDIL…CAVEHLNAEI (202 aa)) constitute a Helicase C-terminal domain. An SEC63 domain is found at 541 to 852 (PLEPGRLMTK…FEEYVGLDIH (312 aa)). Positions 1075–1091 (QKSEILNRTQGKNSTQL) are enriched in polar residues. Residues 1075-1131 (QKSEILNRTQGKNSTQLAGKKAFEKSKTPDENSLHFVGKRDSSSEKSKALSKTPDEN) form a disordered region. The segment covering 1095–1122 (KAFEKSKTPDENSLHFVGKRDSSSEKSK) has biased composition (basic and acidic residues).

The protein belongs to the helicase family. SKI2 subfamily. Transcribed preferentially in early stages of meiocyte development and during meiosis in young flowers.

It is found in the nucleus. It localises to the chromosome. The enzyme catalyses Couples ATP hydrolysis with the unwinding of duplex DNA by translocating in the 3'-5' direction.. It carries out the reaction ATP + H2O = ADP + phosphate + H(+). In terms of biological role, DNA helicase required for crossover formation, complete synapsis of homologous chromosomes and bivalent formation during meiosis. Is specific to recombination events resulting in interference-sensitive crossovers (class I meiotic crossover). Works cooperatively with ZIP4 to promote crossovers. This is ATP-dependent DNA helicase MER3 homolog from Oryza sativa subsp. japonica (Rice).